The following is an 86-amino-acid chain: Putative membrane protein insertion efficiency factor (86 aa).

It belongs to the UPF0161 family.

It localises to the cell inner membrane. Could be involved in insertion of integral membrane proteins into the membrane. The sequence is that of Putative membrane protein insertion efficiency factor from Cellvibrio japonicus (strain Ueda107) (Pseudomonas fluorescens subsp. cellulosa).